Here is a 267-residue protein sequence, read N- to C-terminus: tRNA pseudouridine synthase A (267 aa).

The active-site Nucleophile is Asp51. Tyr109 is a binding site for substrate.

The protein belongs to the tRNA pseudouridine synthase TruA family.

The catalysed reaction is uridine(38/39/40) in tRNA = pseudouridine(38/39/40) in tRNA. In terms of biological role, formation of pseudouridine at positions 38, 39 and 40 in the anticodon stem and loop of transfer RNAs. The sequence is that of tRNA pseudouridine synthase A from Methanothrix thermoacetophila (strain DSM 6194 / JCM 14653 / NBRC 101360 / PT) (Methanosaeta thermophila).